A 309-amino-acid polypeptide reads, in one-letter code: Methionyl-tRNA formyltransferase (309 aa).

109–112 provides a ligand contact to (6S)-5,6,7,8-tetrahydrofolate; sequence SLLP.

Belongs to the Fmt family.

It carries out the reaction L-methionyl-tRNA(fMet) + (6R)-10-formyltetrahydrofolate = N-formyl-L-methionyl-tRNA(fMet) + (6S)-5,6,7,8-tetrahydrofolate + H(+). Its function is as follows. Attaches a formyl group to the free amino group of methionyl-tRNA(fMet). The formyl group appears to play a dual role in the initiator identity of N-formylmethionyl-tRNA by promoting its recognition by IF2 and preventing the misappropriation of this tRNA by the elongation apparatus. The polypeptide is Methionyl-tRNA formyltransferase (Chloroflexus aggregans (strain MD-66 / DSM 9485)).